The primary structure comprises 182 residues: Ribosome maturation factor RimP (182 aa).

Belongs to the RimP family.

Its subcellular location is the cytoplasm. In terms of biological role, required for maturation of 30S ribosomal subunits. This is Ribosome maturation factor RimP from Corynebacterium efficiens (strain DSM 44549 / YS-314 / AJ 12310 / JCM 11189 / NBRC 100395).